The following is a 394-amino-acid chain: 1-deoxy-D-xylulose 5-phosphate reductoisomerase (394 aa).

Thr12, Gly13, Ser14, Ile15, Gly38, Asn41, and Asn132 together coordinate NADPH. Lys133 serves as a coordination point for 1-deoxy-D-xylulose 5-phosphate. Glu134 provides a ligand contact to NADPH. Asp156 contacts Mn(2+). Ser157, Glu158, Ser182, and His205 together coordinate 1-deoxy-D-xylulose 5-phosphate. Glu158 lines the Mn(2+) pocket. Gly211 contacts NADPH. Residues Ser218, Asn223, Lys224, and Glu227 each coordinate 1-deoxy-D-xylulose 5-phosphate. Glu227 provides a ligand contact to Mn(2+).

The protein belongs to the DXR family. Requires Mg(2+) as cofactor. Mn(2+) serves as cofactor.

The enzyme catalyses 2-C-methyl-D-erythritol 4-phosphate + NADP(+) = 1-deoxy-D-xylulose 5-phosphate + NADPH + H(+). It functions in the pathway isoprenoid biosynthesis; isopentenyl diphosphate biosynthesis via DXP pathway; isopentenyl diphosphate from 1-deoxy-D-xylulose 5-phosphate: step 1/6. Catalyzes the NADPH-dependent rearrangement and reduction of 1-deoxy-D-xylulose-5-phosphate (DXP) to 2-C-methyl-D-erythritol 4-phosphate (MEP). The protein is 1-deoxy-D-xylulose 5-phosphate reductoisomerase of Paenarthrobacter aurescens (strain TC1).